Consider the following 1251-residue polypeptide: MPTINSFNYNDPVNNRTILYIKPGGCQQFYKSFNIMKNIWIIPERNVIGTIPQDFLPPTSLKNGDSSYYDPNYLQSDQEKDKFLKIVTKIFNRINDNLSGRILLEELSKANPYLGNDNTPDGDFIINDASAVPIQFSNGSQSILLPNVIIMGAEPDLFETNSSNISLRNNYMPSNHGFGSIAIVTFSPEYSFRFKDNSMNEFIQDPALTLMHELIHSLHGLYGAKGITTKYTITQKQNPLITNIRGTNIEEFLTFGGTDLNIITSAQSNDIYTNLLADYKKIASKLSKVQVSNPLLNPYKDVFEAKYGLDKDASGIYSVNINKFNDIFKKLYSFTEFDLATKFQVKCRQTYIGQYKYFKLSNLLNDSIYNISEGYNINNLKVNFRGQNANLNPRIITPITGRGLVKKIIRFCKNIVSVKGIRKSICIEINNGELFFVASENSYNDDNINTPKEIDDTVTSNNNYENDLDQVILNFNSESAPGLSDEKLNLTIQNDAYIPKYDSNGTSDIEQHDVNELNVFFYLDAQKVPEGENNVNLTSSIDTALLEQPKIYTFFSSEFINNVNKPVQAALFVGWIQQVLVDFTTEANQKSTVDKIADISIVVPYIGLALNIGNEAQKGNFKDALELLGAGILLEFEPELLIPTILVFTIKSFLGSSDNKNKVIKAINNALKERDEKWKEVYSFIVSNWMTKINTQFNKRKEQMYQALQNQVNALKAIIESKYNSYTLEEKNELTNKYDIEQIENELNQKVSIAMNNIDRFLTESSISYLMKLINEVKINKLREYDENVKTYLLDYIIKHGSILGESQQELNSMVIDTLNNSIPFKLSSYTDDKILISYFNKFFKRIKSSSVLNMRYKNDKYVDTSGYDSNININGDVYKYPTNKNQFGIYNDKLSEVNISQNDYIIYDNKYKNFSISFWVRIPNYDNKIVNVNNEYTIINCMRDNNSGWKVSLNHNEIIWTLQDNSGINQKLAFNYGNANGISDYINKWIFVTITNDRLGDSKLYINGNLIDKKSILNLGNIHVSDNILFKIVNCSYTRYIGIRYFNIFDKELDETEIQTLYNNEPNANILKDFWGNYLLYDKEYYLLNVLKPNNFINRRTDSTLSINNIRSTILLANRLYSGIKVKIQRVNNSSTNDNLVRKNDQVYINFVASKTHLLPLYADTATTNKEKTIKISSSGNRFNQVVVMNSVGNCTMNFKNNNGNNIGLLGFKADTVVASTWYYTHMRDNTNSNGFFWNFISEEHGWQEK.

His-212 contacts Zn(2+). Glu-213 is a catalytic residue. The Zn(2+) site is built by His-216 and Glu-251. A disulfide bridge links Cys-412 with Cys-426. The tract at residues 423–819 (KSICIEINNG…ELNSMVIDTL (397 aa)) is translocation domain (TD). The interval 466–515 (NDLDQVILNFNSESAPGLSDEKLNLTIQNDAYIPKYDSNGTSDIEQHDVN) is belt. An N-terminus of receptor binding domain (N-RBD) region spans residues 845 to 1067 (KRIKSSSVLN…EIQTLYNNEP (223 aa)). A C-terminus of receptor binding domain (C-RBD) region spans residues 1068–1251 (NANILKDFWG…ISEEHGWQEK (184 aa)). The Host ganglioside-binding motif motif lies at 1221-1224 (STWY).

This sequence belongs to the peptidase M27 family. As to quaternary structure, heterodimer; disulfide-linked heterodimer of a light chain (LC) and a heavy chain (HC). The LC has the proteolytic/pharmacological activity, while the N- and C-terminal of the HC mediate channel formation and toxin binding, respectively. Interacts with host synaptic vesicle glycoproteins SV2A and SV2B which probably serve as coreceptors. Zn(2+) serves as cofactor.

It is found in the secreted. The protein localises to the host cytoplasm. The protein resides in the host cytosol. It localises to the host synapse. Its subcellular location is the host presynaptic cell membrane. It is found in the host cytoplasmic vesicle. The protein localises to the host secretory vesicle. The protein resides in the host synaptic vesicle membrane. The catalysed reaction is Limited hydrolysis of proteins of the neuroexocytosis apparatus, synaptobrevins, SNAP25 or syntaxin. No detected action on small molecule substrates.. Its function is as follows. Botulinum toxin causes flaccid paralysis by inhibiting neurotransmitter (acetylcholine) release from the presynaptic membranes of nerve terminals of eukaryotic host skeletal and autonomic nervous system, with frequent heart or respiratory failure. Precursor of botulinum neurotoxin E which has 2 coreceptors; complex polysialylated gangliosides found on neural tissue and specific membrane-anchored proteins found in synaptic vesicles. Receptor proteins are exposed on host presynaptic cell membrane during neurotransmitter release, when the toxin heavy chain (HC) binds to them. Upon synaptic vesicle recycling the toxin is taken up via the endocytic pathway. When the pH of the toxin-containing endosome drops a structural rearrangement occurs so that the N-terminus of the HC forms pores that allows the light chain (LC) to translocate into the cytosol. Once in the cytosol the disulfide bond linking the 2 subunits is reduced and LC cleaves its target protein on synaptic vesicles, preventing their fusion with the cytoplasmic membrane and thus neurotransmitter release. Functionally, has proteolytic activity. After translocation into the eukaryotic host cytosol, LC hydrolyzes the '180-Arg-|-Ile-181' bond in SNAP25, blocking neurotransmitter release. In terms of biological role, responsible for host epithelial cell transcytosis, host nerve cell targeting and translocation of light chain (LC) into host cytosol. Composed of 3 subdomains; the translocation domain (TD), and N-terminus and C-terminus of the receptor-binding domain (RBD). The RBD is responsible for the adherence of the toxin to the cell surface. It simultaneously recognizes 2 coreceptors; host polysialated gangliosides and the receptor proteins SV2A and SV2B in close proximity on host synaptic vesicles. Interaction with SV2 proteins requires SV2 glycosylation. The N-terminus of the TD wraps an extended belt around the perimeter of the LC, protecting Zn(2+) in the active site; it may also prevent premature LC dissociation from the translocation channel and protect toxin prior to translocation. The TD inserts into synaptic vesicle membrane to allow translocation into the host cytosol. Binds ganglioside GD1a in vitro. This chain is Botulinum neurotoxin type E, found in Clostridium butyricum.